The chain runs to 590 residues: Cationic amino acid transporter 8, vacuolar (590 aa).

Over Met1 to Leu85 the chain is Cytoplasmic. The helical transmembrane segment at Thr86–Ile106 threads the bilayer. At Thr107 to Gly114 the chain is on the vacuolar side. The chain crosses the membrane as a helical span at residues Ala115–Leu135. Topologically, residues Cys136–Asp160 are cytoplasmic. Residues Phe161–Leu181 form a helical membrane-spanning segment. Over Gly182–Lys209 the chain is Vacuolar. Asn195 carries N-linked (GlcNAc...) asparagine glycosylation. The chain crosses the membrane as a helical span at residues Gly210–Met230. The Cytoplasmic portion of the chain corresponds to Thr231–Trp238. The chain crosses the membrane as a helical span at residues Leu239–Phe259. The Vacuolar segment spans residues Thr260 to Asn266. The helical transmembrane segment at Leu267–Trp287 threads the bilayer. Topologically, residues Ser288–Pro310 are cytoplasmic. The helical transmembrane segment at Ile311–Leu331 threads the bilayer. Over Thr332 to Lys359 the chain is Vacuolar. A helical transmembrane segment spans residues Tyr360 to Gly380. Topologically, residues Gln381 to Thr407 are cytoplasmic. A helical transmembrane segment spans residues Pro408–Leu428. Glu429 is a topological domain (vacuolar). The chain crosses the membrane as a helical span at residues Val430 to Leu450. At Leu451 to Gly465 the chain is on the cytoplasmic side. A helical membrane pass occupies residues Leu466 to Leu486. The Vacuolar segment spans residues Trp487–Gly493. Residues Trp494–Leu514 traverse the membrane as a helical segment. Residues Pro515–Val522 lie on the Cytoplasmic side of the membrane. The chain crosses the membrane as a helical span at residues Trp523–Ile543. Over Gly544 to Arg553 the chain is Vacuolar. The helical transmembrane segment at Phe554–Tyr574 threads the bilayer. Topologically, residues Asp575–Arg590 are cytoplasmic.

This sequence belongs to the amino acid-polyamine-organocation (APC) superfamily. Cationic amino acid transporter (CAT) (TC 2.A.3.3) family. Expressed in roots, stems, flowers and leaves. Mostly present in young and rapidly dividing tissues such as the shoot and root apical meristem, and in young leaves and petioles during seedling development.

The protein localises to the cell membrane. Functionally, permease involved in the transport of the cationic neutral or acidic amino acids. This is Cationic amino acid transporter 8, vacuolar (CAT8) from Arabidopsis thaliana (Mouse-ear cress).